The sequence spans 344 residues: Nuclear distribution protein nudE homolog 1 (344 aa).

The tract at residues 1 to 93 (MEDSGKTFGS…MQHSEGYRQI (93 aa)) is self-association. A coiled-coil region spans residues 18–188 (WRDLAMTYKQ…ELAVQQKQDK (171 aa)). The segment covering 30-47 (ENTQEELREFQEGSREYE) has biased composition (basic and acidic residues). Residues 30-65 (ENTQEELREFQEGSREYEAELETQLQQAETRNRDLL) form a disordered region. Positions 88-156 (EGYRQISALE…ERNAFLESEL (69 aa)) are interaction with PAFAH1B1. An interaction with CENPF region spans residues 167–290 (QRLKDEARDL…QSPSRKSGPA (124 aa)). Residues 181 to 243 (AVQQKQDKPR…CGLGSPSSGT (63 aa)) form a disordered region. Positions 208–230 (ATGSAPSTPITHQGSSSGLNTPE) are enriched in polar residues. Position 211 is a phosphoserine (Ser211). Thr215, Thr228, Thr243, and Thr246 each carry phosphothreonine. Cys274 carries S-palmitoyl cysteine; by ZDHHC2, ZDHHC3 and ZDHHC7 lipidation. A disordered region spans residues 279–337 (YDQSPSRKSGPALGRGTKNRDGIDRRPGSTAVGDKGSGKRLEFAKPSSQLSSPALPSTQ). The residue at position 282 (Ser282) is a Phosphoserine. Over residues 296–305 (KNRDGIDRRP) the composition is skewed to basic and acidic residues. Positions 324-335 (PSSQLSSPALPS) are enriched in low complexity.

Belongs to the nudE family. In terms of assembly, homodimer. Interacts with CNTRL, LIS1, dynein, SLMAP and TCP1. Interacts with CENPF, dynactin, tubulin gamma, PAFAH1B1, PCM1 and PCNT. Interacts with ZNF365. Interacts with GTP-bound RAB9A and RAB9B; the interaction leads to RAB9-dynein motor tethering. Interacts (via C-terminus) with MCRS1 (via C-terminus); phosphorylation of NDE1 inhibits the interaction. In terms of processing, phosphorylated in mitosis. Phosphorylation at Thr-246 is essential for the G2/M transition. Expressed in brain, heart, kidney, liver, lung, skeletal muscle, spleen and testis.

It is found in the cytoplasm. The protein localises to the cytoskeleton. The protein resides in the microtubule organizing center. Its subcellular location is the centrosome. It localises to the spindle. It is found in the chromosome. The protein localises to the centromere. The protein resides in the kinetochore. Its subcellular location is the cleavage furrow. It localises to the cytoplasmic vesicle membrane. Its function is as follows. Required for centrosome duplication and formation and function of the mitotic spindle. Essential for the development of the cerebral cortex. May regulate the production of neurons by controlling the orientation of the mitotic spindle during division of cortical neuronal progenitors of the proliferative ventricular zone of the brain. Orientation of the division plane perpendicular to the layers of the cortex gives rise to two proliferative neuronal progenitors whereas parallel orientation of the division plane yields one proliferative neuronal progenitor and a postmitotic neuron. A premature shift towards a neuronal fate within the progenitor population may result in an overall reduction in the final number of neurons and an increase in the number of neurons in the deeper layers of the cortex. Acts as a RAB9A/B effector that tethers RAB9-associated late endosomes to the dynein motor for their retrograde transport to the trans-Golgi network. In Rattus norvegicus (Rat), this protein is Nuclear distribution protein nudE homolog 1.